Consider the following 239-residue polypeptide: Purine nucleoside phosphorylase DeoD-type (239 aa).

A purine D-ribonucleoside is bound at residue H5. Residues G21, R25, R44, and 88–91 contribute to the phosphate site; that span reads RVGS. A purine D-ribonucleoside contacts are provided by residues 180–182 and 204–205; these read EME and SD. Residue D205 is the Proton donor of the active site.

The protein belongs to the PNP/UDP phosphorylase family. Homohexamer; trimer of homodimers.

The catalysed reaction is a purine D-ribonucleoside + phosphate = a purine nucleobase + alpha-D-ribose 1-phosphate. It carries out the reaction a purine 2'-deoxy-D-ribonucleoside + phosphate = a purine nucleobase + 2-deoxy-alpha-D-ribose 1-phosphate. Catalyzes the reversible phosphorolytic breakdown of the N-glycosidic bond in the beta-(deoxy)ribonucleoside molecules, with the formation of the corresponding free purine bases and pentose-1-phosphate. The sequence is that of Purine nucleoside phosphorylase DeoD-type from Citrobacter koseri (strain ATCC BAA-895 / CDC 4225-83 / SGSC4696).